A 1017-amino-acid polypeptide reads, in one-letter code: Multiple C2 domain and transmembrane region protein 14 (1017 aa).

The C2 1 domain occupies 1-110; that stretch reads MADNVLRKLI…ASAGSETLVY (110 aa). The interval 139–231 is disordered; sequence AAPAATEPKP…PAEVKNPPIP (93 aa). Residues 141–153 show a composition bias toward low complexity; sequence PAATEPKPEAAAA. A compositionally biased stretch (basic and acidic residues) spans 154 to 213; sequence TEEKPPEIAKAEDGKKETEAAKTEEKKEGDKKEEEKPKEEAKPDEKKPDAPPDTKAKKPD. The segment covering 217–231 has biased composition (pro residues); the sequence is APPPPPAEVKNPPIP. 3 consecutive C2 domains span residues 258-387, 420-554, and 587-714; these read DLEL…PQWY, DSGG…SRWF, and VTSD…LNSY. Positions 296, 299, 352, 355, and 359 each coordinate Ca(2+). Helical transmembrane passes span 851 to 871 and 957 to 977; these read VAIV…AFLI and ATCI…IVPF.

It belongs to the MCTP family. It depends on Ca(2+) as a cofactor. As to expression, expressed in incipient leaf primordia and in roots meristems. Observed in flowers.

It is found in the membrane. It localises to the vesicle. The protein localises to the golgi apparatus membrane. In terms of biological role, may function as a signaling molecule by regulating the trafficking of other regulators. In Arabidopsis thaliana (Mouse-ear cress), this protein is Multiple C2 domain and transmembrane region protein 14.